The sequence spans 179 residues: Large ribosomal subunit protein bL27c (179 aa).

Residues 1–51 (MAVSFSLVGAFKGLSLASSSSFLKGDFGAAFPVAPKFSVSFPLKSPLTIES) constitute a chloroplast transit peptide.

The protein belongs to the bacterial ribosomal protein bL27 family. In terms of assembly, part of the 50S ribosomal subunit.

The protein localises to the plastid. It localises to the chloroplast. This Nicotiana tabacum (Common tobacco) protein is Large ribosomal subunit protein bL27c (RPL27).